Consider the following 273-residue polypeptide: Glutamate 5-kinase (273 aa).

Residue Lys15 coordinates ATP. Substrate is bound by residues Ser55, Asp142, and Asn158. Residues 178-179 (SD) and 220-226 (TGGMLSK) each bind ATP.

It belongs to the glutamate 5-kinase family.

Its subcellular location is the cytoplasm. It carries out the reaction L-glutamate + ATP = L-glutamyl 5-phosphate + ADP. It functions in the pathway amino-acid biosynthesis; L-proline biosynthesis; L-glutamate 5-semialdehyde from L-glutamate: step 1/2. Its function is as follows. Catalyzes the transfer of a phosphate group to glutamate to form L-glutamate 5-phosphate. In Streptococcus pyogenes serotype M6 (strain ATCC BAA-946 / MGAS10394), this protein is Glutamate 5-kinase.